We begin with the raw amino-acid sequence, 340 residues long: Lipopolysaccharide heptosyltransferase 3 (340 aa).

This sequence belongs to the glycosyltransferase 9 family.

The enzyme catalyses an L-alpha-D-Hep-(1-&gt;3)-4-O-phospho-L-alpha-D-Hep-(1-&gt;5)-[alpha-Kdo-(2-&gt;4)]-alpha-Kdo-(2-&gt;6)-lipid A + ADP-L-glycero-beta-D-manno-heptose = an L-alpha-D-Hep-(1-&gt;7)-L-alpha-D-Hep-(1-&gt;3)-4-O-phospho-L-alpha-D-Hep-(1-&gt;5)-[alpha-Kdo-(2-&gt;4)]-alpha-Kdo-(2-&gt;6)-lipid A + ADP + H(+). The catalysed reaction is L-alpha-D-Hep-(1-&gt;3)-4-O-phospho-L-alpha-D-Hep-(1-&gt;5)-[alpha-Kdo-(2-&gt;4)]-alpha-Kdo-(2-&gt;6)-lipid A (E. coli) + ADP-L-glycero-beta-D-manno-heptose = L-alpha-D-Hep-(1-&gt;7)-L-alpha-D-Hep-(1-&gt;3)-4-O-phospho-L-alpha-D-Hep-(1-&gt;5)-[alpha-Kdo-(2-&gt;4)]-alpha-Kdo-(2-&gt;6)-lipid A (E. coli) + ADP + H(+). It functions in the pathway bacterial outer membrane biogenesis; LPS core biosynthesis. In terms of biological role, glycosyltransferase involved in the biosynthesis of the core oligosaccharide region of lipopolysaccharide (LPS). Catalyzes the addition of the third heptose unit (HepIII) to the second heptose unit (HepII) of the phospho-Hep2-Kdo2-lipid A module. The transfer of HepIII seems to be a prerequisite to the phosphorylation of the second heptose unit. The polypeptide is Lipopolysaccharide heptosyltransferase 3 (Escherichia coli).